The following is a 167-amino-acid chain: NADH-quinone oxidoreductase subunit B 2 (167 aa).

Residues C38, C39, C104, and C133 each contribute to the [4Fe-4S] cluster site.

The protein belongs to the complex I 20 kDa subunit family. NDH-1 is composed of 14 different subunits. Subunits NuoB, C, D, E, F, and G constitute the peripheral sector of the complex. [4Fe-4S] cluster serves as cofactor.

The protein localises to the cell membrane. It catalyses the reaction a quinone + NADH + 5 H(+)(in) = a quinol + NAD(+) + 4 H(+)(out). NDH-1 shuttles electrons from NADH, via FMN and iron-sulfur (Fe-S) centers, to quinones in the respiratory chain. The immediate electron acceptor for the enzyme in this species is believed to be ubiquinone. Couples the redox reaction to proton translocation (for every two electrons transferred, four hydrogen ions are translocated across the cytoplasmic membrane), and thus conserves the redox energy in a proton gradient. The chain is NADH-quinone oxidoreductase subunit B 2 from Roseiflexus sp. (strain RS-1).